The chain runs to 243 residues: Methylthioribulose-1-phosphate dehydratase (243 aa).

Cys-90 is a substrate binding site. His-108 and His-110 together coordinate Zn(2+). The Proton donor/acceptor role is filled by Glu-131. His-193 contacts Zn(2+).

It belongs to the aldolase class II family. MtnB subfamily. Requires Zn(2+) as cofactor.

The protein resides in the cytoplasm. The enzyme catalyses 5-(methylsulfanyl)-D-ribulose 1-phosphate = 5-methylsulfanyl-2,3-dioxopentyl phosphate + H2O. The protein operates within amino-acid biosynthesis; L-methionine biosynthesis via salvage pathway; L-methionine from S-methyl-5-thio-alpha-D-ribose 1-phosphate: step 2/6. Functionally, catalyzes the dehydration of methylthioribulose-1-phosphate (MTRu-1-P) into 2,3-diketo-5-methylthiopentyl-1-phosphate (DK-MTP-1-P). This Zygosaccharomyces rouxii (strain ATCC 2623 / CBS 732 / NBRC 1130 / NCYC 568 / NRRL Y-229) protein is Methylthioribulose-1-phosphate dehydratase.